The primary structure comprises 218 residues: Monomethylamine corrinoid protein 1 (218 aa).

A B12-binding N-terminal domain is found at 1–91 (MANQEIFDKL…ELEKTKVEGE (91 aa)). Residues 94–218 (TGLAITFVAE…AAKVALNIMK (125 aa)) form the B12-binding domain. A methylcob(III)alamin-binding site is contributed by H107.

Belongs to the methylamine corrinoid protein family. Can form a complex with MtmB.

Its pathway is one-carbon metabolism; methanogenesis from methylamine. Its function is as follows. Acts as a methyl group carrier between MtmB and MtbA. The polypeptide is Monomethylamine corrinoid protein 1 (mtmC1) (Methanosarcina mazei (strain ATCC BAA-159 / DSM 3647 / Goe1 / Go1 / JCM 11833 / OCM 88) (Methanosarcina frisia)).